We begin with the raw amino-acid sequence, 514 residues long: MTVEIRRPVALVILDGWGINPVCEHNAVCQADTPRLRALLESWPHARIGASGRDVGLPDGQMGNSEVGHLNIGAGRTVYQDLTRISLSIEEDTFFENTELRKVMQQVVESQGKLHLMGLLSDGGVHSHMEHLYALVEMARRAGVEQVCIHAFMDGRDTPPQSGAGYLAQLEDKLQDIGLGRVATVIGRYWAMDRDNRWERVEKAYRAMTEGVGTSFESSAAAIADAYAQGQTDEFVEPRFVGGEKPCTVDDGDGMIFFNFRADRAREITRTFTSSDFSGFSREKTPRLAGYVCLTEYDASFGLPMAFPPETYPELLGEVVSRAGRKQLRIAETEKYAHVTFFFNGGSEEPFDGEDRVLIPSPKEVATYDLKPEMSAPAVTDAMLERVASGRYDLIVLNFANPDMVGHTGVESAAIAAMETVDACVGRVVDAVLNAGGSLLITADHGNCEQMADAKGAPHTAHTSNPVPVILVDPDRTGVKLRNGILADLAPTLLELMGIDKPAAMTGRSLLEPS.

Positions 15 and 65 each coordinate Mn(2+). The active-site Phosphoserine intermediate is serine 65. Substrate-binding positions include histidine 126, 156-157 (RD), arginine 188, arginine 194, 261-264 (RADR), and lysine 335. Mn(2+)-binding residues include aspartate 403, histidine 407, aspartate 444, histidine 445, and histidine 462.

The protein belongs to the BPG-independent phosphoglycerate mutase family. In terms of assembly, monomer. It depends on Mn(2+) as a cofactor.

The enzyme catalyses (2R)-2-phosphoglycerate = (2R)-3-phosphoglycerate. Its pathway is carbohydrate degradation; glycolysis; pyruvate from D-glyceraldehyde 3-phosphate: step 3/5. Functionally, catalyzes the interconversion of 2-phosphoglycerate and 3-phosphoglycerate. This Syntrophotalea carbinolica (strain DSM 2380 / NBRC 103641 / GraBd1) (Pelobacter carbinolicus) protein is 2,3-bisphosphoglycerate-independent phosphoglycerate mutase.